The chain runs to 281 residues: MREPRVALESAVLTHGLPYPLNLEVALALEEAVREEGATPKTIALVRGEVRVGLSPEEMEALAAGGAEKASLWNLAALLAQGRSAGTTVAATVHLAHLHGIPVFATGGIGGVHPEPYDESADLVALSRTPILVVSSGPKAILDLRATLERLETLGVSVVGYRTDRLPAFFSPDSPFPVPARVDTPMEAARVYLRARALGLGGVLLVNPVSQGLPYEQVALWVEEAGRMAAREGVFGKALTPYLLRKLSELSSGETDRVNRRLLLENARLAARVALALAGLE.

The active-site Proton donor is the Glu-9. Substrate is bound by residues Lys-69 and Val-89. Residue Asp-118 coordinates Mn(2+). 120–122 (SAD) contributes to the substrate binding site. Catalysis depends on Lys-139, which acts as the Nucleophile.

Belongs to the pseudouridine-5'-phosphate glycosidase family. Homotrimer. Mn(2+) serves as cofactor.

It carries out the reaction D-ribose 5-phosphate + uracil = psi-UMP + H2O. Its function is as follows. Catalyzes the reversible cleavage of pseudouridine 5'-phosphate (PsiMP) to ribose 5-phosphate and uracil. Functions biologically in the cleavage direction, as part of a pseudouridine degradation pathway. This Thermus thermophilus (strain ATCC BAA-163 / DSM 7039 / HB27) protein is Pseudouridine-5'-phosphate glycosidase.